The sequence spans 336 residues: GTPase Obg (336 aa).

The region spanning 1 to 159 is the Obg domain; sequence MKFLDETKVY…KTIWLRLKLI (159 aa). In terms of domain architecture, OBG-type G spans 160–327; sequence ADAGLVGLPN…TLRALRSVID (168 aa). GTP is bound by residues 166–173, 191–195, 212–215, 279–282, and 308–310; these read GLPNAGKS, FTTLH, DIPG, SQID, and SAV. Mg(2+) contacts are provided by serine 173 and threonine 193.

This sequence belongs to the TRAFAC class OBG-HflX-like GTPase superfamily. OBG GTPase family. In terms of assembly, monomer. The cofactor is Mg(2+).

The protein localises to the cytoplasm. Its function is as follows. An essential GTPase which binds GTP, GDP and possibly (p)ppGpp with moderate affinity, with high nucleotide exchange rates and a fairly low GTP hydrolysis rate. Plays a role in control of the cell cycle, stress response, ribosome biogenesis and in those bacteria that undergo differentiation, in morphogenesis control. The chain is GTPase Obg from Sinorhizobium medicae (strain WSM419) (Ensifer medicae).